The primary structure comprises 491 residues: Glucose-6-phosphate exchanger SLC37A2 (491 aa).

A helical membrane pass occupies residues 5–25; that stretch reads LAPGIWYRAFILLITFLIYTC. N-linked (GlcNAc...) asparagine glycans are attached at residues Asn43, Asn52, and Asn58. Helical transmembrane passes span 78–98, 108–130, 132–154, 169–189, and 200–220; these read GAVD…SGIF, LTAG…FWNI, VLWY…WPAV, LIMG…SLLA, and SFVV…FFLI. The interval 229–257 is disordered; sequence SPPQHHGNPEESQDQPEDPANGPSCNKES. Transmembrane regions (helical) follow at residues 292 to 312, 328 to 348, 352 to 372, 377 to 397, 424 to 444, and 452 to 472; these read LCLL…PLYI, TLFD…SDYI, ATTC…YNHV, IGIS…PYAL, AIID…AGLI, and VFYM…RLVY.

Belongs to the major facilitator superfamily. Organophosphate:Pi antiporter (OPA) (TC 2.A.1.4) family.

The protein localises to the endoplasmic reticulum membrane. The catalysed reaction is D-glucose 6-phosphate(in) + phosphate(out) = D-glucose 6-phosphate(out) + phosphate(in). Inhibited by vanadate but not by chlorogenic acid. Functionally, inorganic phosphate and glucose-6-phosphate antiporter. May transport cytoplasmic glucose-6-phosphate into the lumen of the endoplasmic reticulum and translocate inorganic phosphate into the opposite direction. Independent of a lumenal glucose-6-phosphatase. May not play a role in homeostatic regulation of blood glucose levels. The sequence is that of Glucose-6-phosphate exchanger SLC37A2 from Bos taurus (Bovine).